The primary structure comprises 353 residues: Bone morphogenetic protein 2 (353 aa).

Residues 1–239 (GSLKRPEDLL…GHPLHKREKR (239 aa)) constitute a propeptide that is removed on maturation. N91, N121, and N157 each carry an N-linked (GlcNAc...) asparagine glycan. Residues 228 to 248 (GKGHPLHKREKRQAKHKQRKR) form a disordered region. Positions 231-248 (HPLHKREKRQAKHKQRKR) are enriched in basic residues. 3 cysteine pairs are disulfide-bonded: C253/C318, C282/C350, and C286/C352. The N-linked (GlcNAc...) asparagine glycan is linked to N295.

It belongs to the TGF-beta family. In terms of assembly, homodimer; disulfide-linked.

The protein resides in the secreted. Its function is as follows. Negatively regulates the structure and function of the limb apical ectodermal ridge. This is Bone morphogenetic protein 2 (BMP2) from Gallus gallus (Chicken).